We begin with the raw amino-acid sequence, 490 residues long: Polyamine oxidase 2 (490 aa).

FAD-binding residues include E57, R65, V246, and E433. The short motif at 488–490 is the Microbody targeting signal element; that stretch reads SRL.

Belongs to the flavin monoamine oxidase family. It depends on FAD as a cofactor. As to expression, highly expressed in flowers and siliques. Also found in leaf and stem and in low levels in cotyledons, roots and in seedlings.

Its subcellular location is the peroxisome. It catalyses the reaction spermine + O2 + H2O = 3-aminopropanal + spermidine + H2O2. The enzyme catalyses N(1)-acetylspermine + O2 + H2O = 3-acetamidopropanal + spermidine + H2O2. The catalysed reaction is spermidine + O2 + H2O = 3-aminopropanal + putrescine + H2O2. It functions in the pathway amine and polyamine degradation; spermine degradation. Its pathway is amine and polyamine degradation; spermidine degradation. In terms of biological role, flavoenzyme involved in polyamine back-conversion. Catalyzes the oxidation of the secondary amino group of polyamines, such as spermine, spermidine and their acetyl derivatives. Substrate preference is N(1)-acetylspermine &gt; spermine &gt; spermidine. Plays an important role in the regulation of polyamine intracellular concentration. Involved in abscisic acid-mediated developmental processes. May contribute to nitric oxide-mediated effects on root growth. The sequence is that of Polyamine oxidase 2 from Arabidopsis thaliana (Mouse-ear cress).